We begin with the raw amino-acid sequence, 760 residues long: MOXD1 homolog 2 (760 aa).

The segment at 1–34 is disordered; the sequence is MAHPRKAVATPATLQLGPPAQTAQSPAATLRHSR. Low complexity predominate over residues 18 to 34; sequence PPAQTAQSPAATLRHSR. A helical transmembrane segment spans residues 47-67; the sequence is CFISCHTFNLFLLLLLLASGV. Asn-78, Asn-198, and Asn-223 each carry an N-linked (GlcNAc...) asparagine glycan. Residues 117 to 233 form the DOMON domain; the sequence is DDFRILWQII…DTMRLLYMYH (117 aa). Cystine bridges form between Cys-339/Cys-367, Cys-467/Cys-581, and Cys-543/Cys-565. The N-linked (GlcNAc...) asparagine glycan is linked to Asn-668. Positions 678–701 are disordered; sequence RCKPKRPLAPPTERTAPPPASDLS. A helical transmembrane segment spans residues 740–760; it reads FISCLLWLGASSWWLLLMLRT.

This sequence belongs to the copper type II ascorbate-dependent monooxygenase family.

The protein resides in the membrane. In Drosophila melanogaster (Fruit fly), this protein is MOXD1 homolog 2 (olf413).